Reading from the N-terminus, the 335-residue chain is Glycerol-3-phosphate dehydrogenase [NAD(P)+] (335 aa).

NADPH is bound by residues Trp14, Arg33, and Lys111. Sn-glycerol 3-phosphate is bound by residues Lys111, Gly140, and Ser142. An NADPH-binding site is contributed by Ala144. The sn-glycerol 3-phosphate site is built by Lys195, Asp248, Ser258, Arg259, and Asn260. Lys195 serves as the catalytic Proton acceptor. Arg259 is a binding site for NADPH. NADPH contacts are provided by Val283 and Glu285.

Belongs to the NAD-dependent glycerol-3-phosphate dehydrogenase family.

The protein resides in the cytoplasm. It catalyses the reaction sn-glycerol 3-phosphate + NAD(+) = dihydroxyacetone phosphate + NADH + H(+). It carries out the reaction sn-glycerol 3-phosphate + NADP(+) = dihydroxyacetone phosphate + NADPH + H(+). Its pathway is membrane lipid metabolism; glycerophospholipid metabolism. Its function is as follows. Catalyzes the reduction of the glycolytic intermediate dihydroxyacetone phosphate (DHAP) to sn-glycerol 3-phosphate (G3P), the key precursor for phospholipid synthesis. The polypeptide is Glycerol-3-phosphate dehydrogenase [NAD(P)+] (Burkholderia mallei (strain NCTC 10247)).